The following is a 326-amino-acid chain: Zinc finger protein 830 (326 aa).

Residues 1 to 11 (MAASRKGKAVK) are compositionally biased toward basic residues. A disordered region spans residues 1-37 (MAASRKGKAVKAVKQEDLRRLMQETRRDSGRQKRVES). The span at 13–36 (VKQEDLRRLMQETRRDSGRQKRVE) shows a compositional bias: basic and acidic residues. Residues 50 to 72 (CALCDAPVKNALLWQTHVLGKQH) form a C2H2-type zinc finger. Residues 83–108 (TAPAHTPAPAHTPAHTPAAASSSSST) are compositionally biased toward low complexity. Disordered stretches follow at residues 83–214 (TAPA…PVRD), 237–257 (EMRQ…EEGR), and 276–309 (EELR…EEEE). The segment covering 180–195 (HSGSVSKAEQQESQEP) has biased composition (polar residues). Positions 224–295 (KDQLEREWEE…RSRRRSQRRE (72 aa)) form a coiled coil. The segment covering 276–286 (EELRAKQETAR) has biased composition (basic and acidic residues). Over residues 298 to 309 (PMQEEEPLEEEE) the composition is skewed to acidic residues.

The protein localises to the nucleus. Its subcellular location is the chromosome. It is found in the nucleus speckle. In terms of biological role, may act as an important regulator of the cell cycle that participates in the maintenance of genome integrity. The polypeptide is Zinc finger protein 830 (Danio rerio (Zebrafish)).